Consider the following 455-residue polypeptide: MAEERSYFGTDGIRGRVGEAPITPDFVLRLGWAAGRVLAGEGQRKVVIGKDTRLSGYMFESALEAGFAAAGVHSLMLGPMPTPAIAYLTRTLHARAGVVISASHNPHHDNGIKFFGPDGYKLDDATEEAIERLLQDGPPQMVRCEELGRATRINDAVGRYIEFCKGSVQRQIDLRGLRVVVDCAHGATYQAAPAVLAELGADVVVIGNEPDGLNINVDHGSQHPERLCQRVVEASADVGVAFDGDGDRVIMVDRYGRVIDGDGLLYIIATARVARGQVRGAVVGTQMTNLGLEVALQELGLVLERTRVGDRYVLERLLQVGGTLGGESSGHIICLDRTTTGDGLISALQVLEAMVTTGRPLDELVAGMHYYPQRLVNVPVSRGPDVIRLPAVTEAVEEAEHQLGDHGRVLLRPSGTEPLLRVMVEGADEGQVNRLADWLAVTVETAARGAATDPI.

Ser-103 (phosphoserine intermediate) is an active-site residue. Ser-103, Asp-243, Asp-245, and Asp-247 together coordinate Mg(2+). A Phosphoserine modification is found at Ser-103.

The protein belongs to the phosphohexose mutase family. Mg(2+) is required as a cofactor. In terms of processing, activated by phosphorylation.

The catalysed reaction is alpha-D-glucosamine 1-phosphate = D-glucosamine 6-phosphate. Functionally, catalyzes the conversion of glucosamine-6-phosphate to glucosamine-1-phosphate. This Halorhodospira halophila (strain DSM 244 / SL1) (Ectothiorhodospira halophila (strain DSM 244 / SL1)) protein is Phosphoglucosamine mutase.